Reading from the N-terminus, the 379-residue chain is Probable purine permease 11 (379 aa).

10 helical membrane-spanning segments follow: residues 43 to 63 (WVLVSVNIFFLIGGQAASVLL), 76 to 96 (WMATLVQTAAFPILYIPLLLL), 114 to 134 (IVLIYVLLGVIIAGDNMLYSV), 144 to 164 (YSLICATQLAFNAVFSYFINA), 167 to 187 (FTALILNSVVLLSFSAALIAL), 203 to 223 (IVGFVCTLAASALYSLLLSLM), 239 to 259 (VLEMQIYTSLVATCVSVIGLF), 294 to 313 (VCSVGVVGLIFLVTSLFSNV), 314 to 330 (ISTLSLAVTPLAALVVF), and 334 to 354 (MSGVKIMAMLIAIWGFASYVY).

The protein belongs to the purine permeases (TC 2.A.7.14) family. As to quaternary structure, may form a complex with the potassium channel subunit KAT1.

It localises to the membrane. The chain is Probable purine permease 11 (PUP11) from Arabidopsis thaliana (Mouse-ear cress).